Reading from the N-terminus, the 496-residue chain is MGFLSLVGNSFGCSASGERLVSAARDGDLQEARALLEYNPRLARYSTFGGRNSPLHYAAAQGHHEIVSLLLESGVEINLRNYRGQTALMQACQYGHWEVVQTLMLFNANVHRTDYLNGGSALHFAALHGHARCLRLVLADYVPSMPNFWNSMKDSLSEEGPSADLDEDGLFKMVNQKADGGLTPLHMAALNGHVECVQLLLDLGASVIEATIEDGTTIDLIGAGSTPLHYAACGGNAVCCQLLIARGASLSAQNASGWTPLMVARSWHRNSLEEILSKEPESRIRTVPSPYLCLPLMSIMSIAREFGWRYLNQSPVCIDPCAVCLEGSCSVAAEGCKHEFCTRCALYLCSTSYTSVSPAGAIPCPLCRHPIIAFTALPGTSPIRELPRNSLSLSFCTTCPAVNSDSTPSIASHLYRTEFQCARMPPMGSSSFRSLSCQRLPAMKLNPSFCMGAMDTNPCLIRCSRFGPSFRRSASQGESSRRAWPLTFDPIAATGS.

5 ANK repeats span residues Gly-50–Leu-79, Arg-83–Arg-112, Asn-117–Asn-147, Gly-180–Glu-209, and Ala-223–Ala-252. The RING-type zinc finger occupies Cys-321–Arg-368.

It carries out the reaction S-ubiquitinyl-[E2 ubiquitin-conjugating enzyme]-L-cysteine + [acceptor protein]-L-lysine = [E2 ubiquitin-conjugating enzyme]-L-cysteine + N(6)-ubiquitinyl-[acceptor protein]-L-lysine.. The protein operates within protein modification; protein ubiquitination. The protein is Probable E3 ubiquitin-protein ligase XBOS32 (XBOS32) of Oryza sativa subsp. japonica (Rice).